Here is a 438-residue protein sequence, read N- to C-terminus: Aspartate--tRNA(Asp/Asn) ligase (438 aa).

Glu176 lines the L-aspartate pocket. Residues 198 to 201 (QLYK) are aspartate. L-aspartate is bound at residue Arg220. ATP contacts are provided by residues 220–222 (RAE), 228–230 (RHL), and Glu361. Residues Glu361 and Ser364 each contribute to the Mg(2+) site. L-aspartate is bound by residues Ser364 and Arg368. Position 409–412 (409–412 (GIER)) interacts with ATP.

The protein belongs to the class-II aminoacyl-tRNA synthetase family. Type 2 subfamily. In terms of assembly, homodimer. The cofactor is Mg(2+).

Its subcellular location is the cytoplasm. It catalyses the reaction tRNA(Asx) + L-aspartate + ATP = L-aspartyl-tRNA(Asx) + AMP + diphosphate. Its function is as follows. Aspartyl-tRNA synthetase with relaxed tRNA specificity since it is able to aspartylate not only its cognate tRNA(Asp) but also tRNA(Asn). Reaction proceeds in two steps: L-aspartate is first activated by ATP to form Asp-AMP and then transferred to the acceptor end of tRNA(Asp/Asn). The protein is Aspartate--tRNA(Asp/Asn) ligase of Methanococcus aeolicus (strain ATCC BAA-1280 / DSM 17508 / OCM 812 / Nankai-3).